The sequence spans 701 residues: Ribosomal RNA large subunit methyltransferase K/L (701 aa).

The THUMP domain maps to 43–154; that stretch reads LLYQSLMWSR…KETAHISLDL (112 aa).

The protein belongs to the methyltransferase superfamily. RlmKL family.

It is found in the cytoplasm. The catalysed reaction is guanosine(2445) in 23S rRNA + S-adenosyl-L-methionine = N(2)-methylguanosine(2445) in 23S rRNA + S-adenosyl-L-homocysteine + H(+). The enzyme catalyses guanosine(2069) in 23S rRNA + S-adenosyl-L-methionine = N(2)-methylguanosine(2069) in 23S rRNA + S-adenosyl-L-homocysteine + H(+). In terms of biological role, specifically methylates the guanine in position 2445 (m2G2445) and the guanine in position 2069 (m7G2069) of 23S rRNA. The protein is Ribosomal RNA large subunit methyltransferase K/L of Klebsiella pneumoniae subsp. pneumoniae (strain ATCC 700721 / MGH 78578).